We begin with the raw amino-acid sequence, 358 residues long: Protein-glutamate methylesterase/protein-glutamine glutaminase 1 (358 aa).

The region spanning 7 to 124 (SVLLVDDSAV…KNFLIDSAAE (118 aa)) is the Response regulatory domain. Position 58 is a 4-aspartylphosphate (Asp58). A CheB-type methylesterase domain is found at 170–358 (AQTTERIVAI…QEIHQAILHR (189 aa)). Residues Ser182, His208, and Asp304 contribute to the active site.

Belongs to the CheB family. In terms of processing, phosphorylated by CheA. Phosphorylation of the N-terminal regulatory domain activates the methylesterase activity.

It is found in the cytoplasm. It catalyses the reaction [protein]-L-glutamate 5-O-methyl ester + H2O = L-glutamyl-[protein] + methanol + H(+). The catalysed reaction is L-glutaminyl-[protein] + H2O = L-glutamyl-[protein] + NH4(+). Functionally, involved in chemotaxis. Part of a chemotaxis signal transduction system that modulates chemotaxis in response to various stimuli. Catalyzes the demethylation of specific methylglutamate residues introduced into the chemoreceptors (methyl-accepting chemotaxis proteins or MCP) by CheR. Also mediates the irreversible deamidation of specific glutamine residues to glutamic acid. The sequence is that of Protein-glutamate methylesterase/protein-glutamine glutaminase 1 from Pseudomonas savastanoi pv. phaseolicola (strain 1448A / Race 6) (Pseudomonas syringae pv. phaseolicola (strain 1448A / Race 6)).